The following is a 239-amino-acid chain: uncharacterized protein (239 aa).

Its subcellular location is the endoplasmic reticulum. The protein resides in the golgi apparatus. This is an uncharacterized protein from Schizosaccharomyces pombe (strain 972 / ATCC 24843) (Fission yeast).